The following is a 398-amino-acid chain: Succinate--CoA ligase [ADP-forming] subunit beta (398 aa).

Residues 9–237 enclose the ATP-grasp domain; it reads RDLFETHGVP…AGGLDILELK (229 aa). ATP is bound by residues lysine 45, 52–54, alanine 94, and glutamate 99; that span reads GRG. Asparagine 191 and aspartate 205 together coordinate Mg(2+). Substrate-binding positions include asparagine 257 and 319–321; that span reads GIT.

This sequence belongs to the succinate/malate CoA ligase beta subunit family. Heterotetramer of two alpha and two beta subunits. Mg(2+) is required as a cofactor.

The enzyme catalyses succinate + ATP + CoA = succinyl-CoA + ADP + phosphate. It catalyses the reaction GTP + succinate + CoA = succinyl-CoA + GDP + phosphate. It functions in the pathway carbohydrate metabolism; tricarboxylic acid cycle; succinate from succinyl-CoA (ligase route): step 1/1. In terms of biological role, succinyl-CoA synthetase functions in the citric acid cycle (TCA), coupling the hydrolysis of succinyl-CoA to the synthesis of either ATP or GTP and thus represents the only step of substrate-level phosphorylation in the TCA. The beta subunit provides nucleotide specificity of the enzyme and binds the substrate succinate, while the binding sites for coenzyme A and phosphate are found in the alpha subunit. This is Succinate--CoA ligase [ADP-forming] subunit beta from Corynebacterium glutamicum (strain ATCC 13032 / DSM 20300 / JCM 1318 / BCRC 11384 / CCUG 27702 / LMG 3730 / NBRC 12168 / NCIMB 10025 / NRRL B-2784 / 534).